Consider the following 318-residue polypeptide: Probable dual-specificity RNA methyltransferase RlmN (318 aa).

Glu63 (proton acceptor) is an active-site residue. A Radical SAM core domain is found at 69–299; the sequence is HDYGRTVCVS…VSLRRELGAD (231 aa). A disulfide bond links Cys76 and Cys304. Residues Cys83, Cys87, and Cys90 each contribute to the [4Fe-4S] cluster site. S-adenosyl-L-methionine contacts are provided by residues 130-131, Ser162, 185-187, and Asn261; these read GE and SLH. Cys304 acts as the S-methylcysteine intermediate in catalysis.

Belongs to the radical SAM superfamily. RlmN family. Requires [4Fe-4S] cluster as cofactor.

The protein resides in the cytoplasm. The enzyme catalyses adenosine(2503) in 23S rRNA + 2 reduced [2Fe-2S]-[ferredoxin] + 2 S-adenosyl-L-methionine = 2-methyladenosine(2503) in 23S rRNA + 5'-deoxyadenosine + L-methionine + 2 oxidized [2Fe-2S]-[ferredoxin] + S-adenosyl-L-homocysteine. It carries out the reaction adenosine(37) in tRNA + 2 reduced [2Fe-2S]-[ferredoxin] + 2 S-adenosyl-L-methionine = 2-methyladenosine(37) in tRNA + 5'-deoxyadenosine + L-methionine + 2 oxidized [2Fe-2S]-[ferredoxin] + S-adenosyl-L-homocysteine. Functionally, specifically methylates position 2 of adenine 2503 in 23S rRNA and position 2 of adenine 37 in tRNAs. This Desulforudis audaxviator (strain MP104C) protein is Probable dual-specificity RNA methyltransferase RlmN.